A 403-amino-acid polypeptide reads, in one-letter code: S-adenosylmethionine synthase (403 aa).

Residue H16 participates in ATP binding. A Mg(2+)-binding site is contributed by D18. Position 44 (E44) interacts with K(+). L-methionine contacts are provided by E57 and Q100. Positions 100–110 (QSPDIAQGVDR) are flexible loop. Positions 106–126 (QGVDRSYESRSGSASTDAHDL) are disordered. ATP is bound by residues 176-178 (DGK), 248-249 (KF), D257, 263-264 (RK), A280, and K284. D257 provides a ligand contact to L-methionine. L-methionine is bound at residue K288.

This sequence belongs to the AdoMet synthase family. As to quaternary structure, homotetramer; dimer of dimers. It depends on Mg(2+) as a cofactor. K(+) is required as a cofactor.

It is found in the cytoplasm. The catalysed reaction is L-methionine + ATP + H2O = S-adenosyl-L-methionine + phosphate + diphosphate. The protein operates within amino-acid biosynthesis; S-adenosyl-L-methionine biosynthesis; S-adenosyl-L-methionine from L-methionine: step 1/1. Its function is as follows. Catalyzes the formation of S-adenosylmethionine (AdoMet) from methionine and ATP. The overall synthetic reaction is composed of two sequential steps, AdoMet formation and the subsequent tripolyphosphate hydrolysis which occurs prior to release of AdoMet from the enzyme. The sequence is that of S-adenosylmethionine synthase from Clavibacter michiganensis subsp. michiganensis (strain NCPPB 382).